Consider the following 1377-residue polypeptide: DNA-directed RNA polymerase subunit beta (1377 aa).

It belongs to the RNA polymerase beta chain family. As to quaternary structure, the RNAP catalytic core consists of 2 alpha, 1 beta, 1 beta' and 1 omega subunit. When a sigma factor is associated with the core the holoenzyme is formed, which can initiate transcription.

The enzyme catalyses RNA(n) + a ribonucleoside 5'-triphosphate = RNA(n+1) + diphosphate. DNA-dependent RNA polymerase catalyzes the transcription of DNA into RNA using the four ribonucleoside triphosphates as substrates. The polypeptide is DNA-directed RNA polymerase subunit beta (Brucella abortus (strain S19)).